The sequence spans 398 residues: Putative transposase y4qJ (398 aa).

This sequence belongs to the transposase 32 family.

The polypeptide is Putative transposase y4qJ (Sinorhizobium fredii (strain NBRC 101917 / NGR234)).